The following is a 627-amino-acid chain: MACPF domain-containing protein At1g14780 (627 aa).

The 339-residue stretch at 1 to 339 (MSRDGGDVIE…PPLMDLQYFL (339 aa)) folds into the MACPF domain.

This sequence belongs to the complement C6/C7/C8/C9 (TC 1.C.39) family.

Its function is as follows. Negatively controls the salicylic acid (SA)-mediated pathway of programmed cell death in plant immunity. In Arabidopsis thaliana (Mouse-ear cress), this protein is MACPF domain-containing protein At1g14780.